Consider the following 152-residue polypeptide: Protein Smg homolog (152 aa).

This sequence belongs to the Smg family.

The chain is Protein Smg homolog from Chromobacterium violaceum (strain ATCC 12472 / DSM 30191 / JCM 1249 / CCUG 213 / NBRC 12614 / NCIMB 9131 / NCTC 9757 / MK).